The primary structure comprises 225 residues: Ribosome maturation factor RimM (225 aa).

Residues 144–225 enclose the PRC barrel domain; the sequence is ADEFYWVDLI…RIVVDWEADY (82 aa).

This sequence belongs to the RimM family. As to quaternary structure, binds ribosomal protein uS19.

It is found in the cytoplasm. Functionally, an accessory protein needed during the final step in the assembly of 30S ribosomal subunit, possibly for assembly of the head region. Essential for efficient processing of 16S rRNA. May be needed both before and after RbfA during the maturation of 16S rRNA. It has affinity for free ribosomal 30S subunits but not for 70S ribosomes. The chain is Ribosome maturation factor RimM from Burkholderia orbicola (strain MC0-3).